The primary structure comprises 260 residues: Ribosomal RNA small subunit methyltransferase G (260 aa).

S-adenosyl-L-methionine contacts are provided by residues glycine 94, phenylalanine 99, 117–119 (DSS), 145–146 (AE), and arginine 164.

Belongs to the methyltransferase superfamily. RNA methyltransferase RsmG family.

The protein resides in the cytoplasm. Functionally, specifically methylates the N7 position of a guanine in 16S rRNA. The chain is Ribosomal RNA small subunit methyltransferase G from Synechococcus sp. (strain JA-3-3Ab) (Cyanobacteria bacterium Yellowstone A-Prime).